Consider the following 257-residue polypeptide: Flap endonuclease Xni (257 aa).

Aspartate 109 serves as a coordination point for Mg(2+). In terms of domain architecture, 5'-3' exonuclease spans 165-254; it reads VKPEQLADYW…GFNLQDIRYE (90 aa). K(+) is bound by residues leucine 176, proline 185, isoleucine 187, and isoleucine 190. The interaction with DNA stretch occupies residues 189–194; that stretch reads GIGPKA.

Belongs to the Xni family. Mg(2+) is required as a cofactor. The cofactor is K(+).

Has flap endonuclease activity. During DNA replication, flap endonucleases cleave the 5'-overhanging flap structure that is generated by displacement synthesis when DNA polymerase encounters the 5'-end of a downstream Okazaki fragment. This chain is Flap endonuclease Xni, found in Vibrio atlanticus (strain LGP32) (Vibrio splendidus (strain Mel32)).